A 256-amino-acid chain; its full sequence is Glutamate racemase (256 aa).

Residues 12–13 (DS) and 44–45 (YG) each bind substrate. Residue Cys-75 is the Proton donor/acceptor of the active site. 76 to 77 (NT) serves as a coordination point for substrate. Residue Cys-186 is the Proton donor/acceptor of the active site. 187 to 188 (TH) contacts substrate.

This sequence belongs to the aspartate/glutamate racemases family.

It catalyses the reaction L-glutamate = D-glutamate. Its pathway is cell wall biogenesis; peptidoglycan biosynthesis. Functionally, provides the (R)-glutamate required for cell wall biosynthesis. The chain is Glutamate racemase from Clostridium acetobutylicum (strain ATCC 824 / DSM 792 / JCM 1419 / IAM 19013 / LMG 5710 / NBRC 13948 / NRRL B-527 / VKM B-1787 / 2291 / W).